The chain runs to 349 residues: Protein-glutamate methylesterase/protein-glutamine glutaminase (349 aa).

A Response regulatory domain is found at 5 to 122 (KVLVVDDSAF…SLDLYKVKDE (118 aa)). At D56 the chain carries 4-aspartylphosphate. A CheB-type methylesterase domain is found at 156–349 (ARPQQAIVAI…AAAIVQLIGE (194 aa)). Catalysis depends on residues S168, H195, and D291.

The protein belongs to the CheB family. Phosphorylated by CheA. Phosphorylation of the N-terminal regulatory domain activates the methylesterase activity.

The protein resides in the cytoplasm. It catalyses the reaction [protein]-L-glutamate 5-O-methyl ester + H2O = L-glutamyl-[protein] + methanol + H(+). The enzyme catalyses L-glutaminyl-[protein] + H2O = L-glutamyl-[protein] + NH4(+). Its function is as follows. Involved in chemotaxis. Part of a chemotaxis signal transduction system that modulates chemotaxis in response to various stimuli. Catalyzes the demethylation of specific methylglutamate residues introduced into the chemoreceptors (methyl-accepting chemotaxis proteins or MCP) by CheR. Also mediates the irreversible deamidation of specific glutamine residues to glutamic acid. This chain is Protein-glutamate methylesterase/protein-glutamine glutaminase, found in Geobacillus kaustophilus (strain HTA426).